The primary structure comprises 335 residues: CTD kinase subunit beta (335 aa).

Cyclin N-terminal domains lie at 26 to 151 (ILST…CFDF) and 158 to 241 (NYMV…LYMH). The tract at residues 269-293 (KNSGRPQKPPQIDPHSSSLADEYRE) is disordered.

Belongs to the cyclin family. As to quaternary structure, CTDK-I consists of three subunits, ctk1/lsk1, ctk2/lsc1 and ctk3 (also called alpha, beta and gamma). Interacts with ctk1/lsk1. This interaction is dependent on ctk1/lsk1 kinase activity.

Its subcellular location is the cytoplasm. The protein localises to the nucleus. In terms of biological role, cyclin subunit of the CTDK-I complex, which hyperphosphorylates the C-terminal heptapeptide repeat domain (CTD) of the largest RNA polymerase II subunit. As part of the CTDK-I complex, involved in RNA polymerase II transcriptional elongation and pre-mRNA 3'-end processing. Together with ctk3, required for ctk1/lsk1 CTD kinase activation. Together with ctk1/lsk1, required for the regulation of cytokinesis by phosphorylating 'Ser-2' residues found in the heptad repeats of the CTD. This is CTD kinase subunit beta (lsc1) from Schizosaccharomyces pombe (strain 972 / ATCC 24843) (Fission yeast).